Consider the following 296-residue polypeptide: Fructose-bisphosphate aldolase class 1 (296 aa).

Glu-175 acts as the Proton acceptor in catalysis. Lys-212 (schiff-base intermediate with dihydroxyacetone-P) is an active-site residue.

It belongs to the class I fructose-bisphosphate aldolase family.

It carries out the reaction beta-D-fructose 1,6-bisphosphate = D-glyceraldehyde 3-phosphate + dihydroxyacetone phosphate. Its pathway is carbohydrate degradation; glycolysis; D-glyceraldehyde 3-phosphate and glycerone phosphate from D-glucose: step 4/4. The protein is Fructose-bisphosphate aldolase class 1 of Staphylococcus aureus (strain MSSA476).